We begin with the raw amino-acid sequence, 87 residues long: Large ribosomal subunit protein uL23c (87 aa).

This sequence belongs to the universal ribosomal protein uL23 family. Part of the 50S ribosomal subunit.

It is found in the plastid. Its subcellular location is the chloroplast. Its function is as follows. Binds to 23S rRNA. This is Large ribosomal subunit protein uL23c (rpl23) from Ostreococcus tauri.